We begin with the raw amino-acid sequence, 90 residues long: Cluster 41 protein AFLA_114800 (90 aa).

Residues 55–77 form a helical membrane-spanning segment; that stretch reads GLLLLCCFYPIGNLILLVRLSLV. N-linked (GlcNAc...) asparagine glycosylation occurs at N80.

Its subcellular location is the membrane. Cluster 41 protein; part of the gene cluster 41 that mediates the biosynthesis of an extracellular and diffusible metabolite that is able to stimulate colony sclerotial production. In Aspergillus flavus (strain ATCC 200026 / FGSC A1120 / IAM 13836 / NRRL 3357 / JCM 12722 / SRRC 167), this protein is Cluster 41 protein AFLA_114800.